The chain runs to 347 residues: DNA-directed RNA polymerase subunit alpha (347 aa).

Positions 1–243 (MLIKQGDRLI…DQISVFINFD (243 aa)) are alpha N-terminal domain (alpha-NTD). The tract at residues 260–347 (VNENLFKGID…EWKRKQQNEA (88 aa)) is alpha C-terminal domain (alpha-CTD).

The protein belongs to the RNA polymerase alpha chain family. As to quaternary structure, homodimer. The RNAP catalytic core consists of 2 alpha, 1 beta, 1 beta' and 1 omega subunit. When a sigma factor is associated with the core the holoenzyme is formed, which can initiate transcription.

The enzyme catalyses RNA(n) + a ribonucleoside 5'-triphosphate = RNA(n+1) + diphosphate. Functionally, DNA-dependent RNA polymerase catalyzes the transcription of DNA into RNA using the four ribonucleoside triphosphates as substrates. The sequence is that of DNA-directed RNA polymerase subunit alpha from Nitratidesulfovibrio vulgaris (strain DSM 19637 / Miyazaki F) (Desulfovibrio vulgaris).